A 463-amino-acid polypeptide reads, in one-letter code: Cytoplasmic 60S subunit biogenesis factor SPCC550.15c (463 aa).

C2H2-type zinc fingers lie at residues 5–30 (FACT…DWHH) and 70–94 (QNCE…SKKH). A disordered region spans residues 109–136 (KLQSEDASSIASSTLSMGEPVVDSEIEE). The segment covering 113-124 (EDASSIASSTLS) has biased composition (polar residues). Phosphoserine is present on residues Ser150 and Ser155. Positions 155–189 (SLHGRESEPSKTELATSIPQSNEASKSHLFTQEPT) are disordered. Over residues 167-188 (ELATSIPQSNEASKSHLFTQEP) the composition is skewed to polar residues. 2 consecutive C2H2-type zinc fingers follow at residues 208–231 (RDCL…KASH) and 259–283 (FTCL…QKGH). Positions 317-338 (TVVEEDGSSGEGDWEDVSDDSD) are enriched in acidic residues. Disordered stretches follow at residues 317–341 (TVVE…DNSS) and 444–463 (ANKM…ALLQ).

Belongs to the REI1 family. Associates with nascent pre-60S particles that have not yet entered the translating pool, and is released from mature 60S subunits.

The protein localises to the cytoplasm. Its function is as follows. Pre-60S-associated factor involved in the cytoplasmic maturation of the 60S subunit. Involved in the dissociation and recycling of other late pre-60S factors before newly synthesized large ribosomal subunits enter translation. This is Cytoplasmic 60S subunit biogenesis factor SPCC550.15c from Schizosaccharomyces pombe (strain 972 / ATCC 24843) (Fission yeast).